Reading from the N-terminus, the 153-residue chain is UPF0260 protein YcgN (153 aa).

It belongs to the UPF0260 family.

The protein is UPF0260 protein YcgN of Salmonella agona (strain SL483).